Here is a 476-residue protein sequence, read N- to C-terminus: Eukaryotic translation initiation factor 3 subunit L (476 aa).

Positions 257-452 (DAIRMFSHIL…DLDYALEKDL (196 aa)) constitute a PCI domain.

It belongs to the eIF-3 subunit L family. As to quaternary structure, component of the eukaryotic translation initiation factor 3 (eIF-3) complex.

It is found in the cytoplasm. Functionally, component of the eukaryotic translation initiation factor 3 (eIF-3) complex, which is involved in protein synthesis of a specialized repertoire of mRNAs and, together with other initiation factors, stimulates binding of mRNA and methionyl-tRNAi to the 40S ribosome. The eIF-3 complex specifically targets and initiates translation of a subset of mRNAs involved in cell proliferation. The protein is Eukaryotic translation initiation factor 3 subunit L of Aspergillus terreus (strain NIH 2624 / FGSC A1156).